Here is a 207-residue protein sequence, read N- to C-terminus: Hydrogenase expression/formation protein HoxM (207 aa).

Positions 19, 65, and 96 each coordinate Ni(2+).

This sequence belongs to the peptidase A31 family.

Functionally, not known. Could be involved in the processing of hydrogenase. The chain is Hydrogenase expression/formation protein HoxM (hoxM) from Azotobacter vinelandii.